The primary structure comprises 242 residues: 1-(5-phosphoribosyl)-5-[(5-phosphoribosylamino)methylideneamino] imidazole-4-carboxamide isomerase (242 aa).

The Proton acceptor role is filled by aspartate 10. The Proton donor role is filled by aspartate 131.

Belongs to the HisA/HisF family.

Its subcellular location is the cytoplasm. It carries out the reaction 1-(5-phospho-beta-D-ribosyl)-5-[(5-phospho-beta-D-ribosylamino)methylideneamino]imidazole-4-carboxamide = 5-[(5-phospho-1-deoxy-D-ribulos-1-ylimino)methylamino]-1-(5-phospho-beta-D-ribosyl)imidazole-4-carboxamide. The protein operates within amino-acid biosynthesis; L-histidine biosynthesis; L-histidine from 5-phospho-alpha-D-ribose 1-diphosphate: step 4/9. This chain is 1-(5-phosphoribosyl)-5-[(5-phosphoribosylamino)methylideneamino] imidazole-4-carboxamide isomerase, found in Granulibacter bethesdensis (strain ATCC BAA-1260 / CGDNIH1).